Here is a 310-residue protein sequence, read N- to C-terminus: Serine/threonine-protein phosphatase 4 catalytic subunit (310 aa).

Mn(2+) is bound by residues Asp-53, His-55, Asp-81, and Asn-113. Residue His-114 is the Proton donor of the active site. His-163 and His-237 together coordinate Mn(2+). Leu-310 carries the post-translational modification Leucine methyl ester.

It belongs to the PPP phosphatase family. PP-4 (PP-X) subfamily. As to quaternary structure, catalytic subunit of the histone H2A phosphatase complex (HTP-C) containing PPH3, PSY2 and PSY4. Mn(2+) is required as a cofactor.

Its subcellular location is the cytoplasm. It localises to the nucleus. The catalysed reaction is O-phospho-L-seryl-[protein] + H2O = L-seryl-[protein] + phosphate. It carries out the reaction O-phospho-L-threonyl-[protein] + H2O = L-threonyl-[protein] + phosphate. Functionally, involved in the dephosphorylation and activation of the transcription factor GLN3 in response to nutrient availability. Forms the histone H2A phosphatase complex in association with the regulatory subunits PSY2 and PSY4, which dephosphorylates H2AS128ph (gamma-H2A) that has been displaced from sites of DNA lesions in the double-stranded DNA break repair process. Dephosphorylation is necessary for efficient recovery from the DNA damage checkpoint. This chain is Serine/threonine-protein phosphatase 4 catalytic subunit (PPH3), found in Eremothecium gossypii (strain ATCC 10895 / CBS 109.51 / FGSC 9923 / NRRL Y-1056) (Yeast).